The sequence spans 317 residues: 4-diphosphocytidyl-2-C-methyl-D-erythritol kinase (317 aa).

K17 is an active-site residue. Residue 109–119 (PVAGGMGGGSA) coordinates ATP. D151 is a catalytic residue.

This sequence belongs to the GHMP kinase family. IspE subfamily.

The catalysed reaction is 4-CDP-2-C-methyl-D-erythritol + ATP = 4-CDP-2-C-methyl-D-erythritol 2-phosphate + ADP + H(+). It participates in isoprenoid biosynthesis; isopentenyl diphosphate biosynthesis via DXP pathway; isopentenyl diphosphate from 1-deoxy-D-xylulose 5-phosphate: step 3/6. Catalyzes the phosphorylation of the position 2 hydroxy group of 4-diphosphocytidyl-2C-methyl-D-erythritol. The chain is 4-diphosphocytidyl-2-C-methyl-D-erythritol kinase from Paenarthrobacter aurescens (strain TC1).